A 369-amino-acid chain; its full sequence is Gibberellin 3-beta-dioxygenase 2-3 (369 aa).

In terms of domain architecture, Fe2OG dioxygenase spans 205–306; that stretch reads MTATMHLNWY…RISLGYFLGP (102 aa). The Fe cation site is built by His-229, Asp-231, and His-287. The active site involves Arg-297.

The protein belongs to the iron/ascorbate-dependent oxidoreductase family. GA3OX subfamily. L-ascorbate is required as a cofactor. It depends on Fe cation as a cofactor.

It catalyses the reaction gibberellin A20 + 2-oxoglutarate + O2 = gibberellin A1 + succinate + CO2. Its function is as follows. Converts the inactive gibberellin precursors GA9 and GA20 in the bioactives gibberellins GA4 and GA1. The sequence is that of Gibberellin 3-beta-dioxygenase 2-3 (GA3ox2-3) from Triticum aestivum (Wheat).